Reading from the N-terminus, the 483-residue chain is Regulatory protein ViaA (483 aa).

Belongs to the ViaA family. In terms of assembly, homodimer. Interacts with RavA.

It is found in the cytoplasm. Component of the RavA-ViaA chaperone complex, which may act on the membrane to optimize the function of some of the respiratory chains. ViaA stimulates the ATPase activity of RavA. This is Regulatory protein ViaA from Escherichia coli O127:H6 (strain E2348/69 / EPEC).